Reading from the N-terminus, the 202-residue chain is Na(+)-translocating NADH-quinone reductase subunit E (202 aa).

Transmembrane regions (helical) follow at residues 11 to 31, 39 to 59, 79 to 99, 114 to 134, 144 to 164, and 180 to 200; these read SIFL…FLAV, MGLG…NQLV, LSFL…QILE, GIFL…AFAV, IFYG…LAAV, and LGSV…FSGV.

The protein belongs to the NqrDE/RnfAE family. Composed of six subunits; NqrA, NqrB, NqrC, NqrD, NqrE and NqrF.

It localises to the cell inner membrane. The catalysed reaction is a ubiquinone + n Na(+)(in) + NADH + H(+) = a ubiquinol + n Na(+)(out) + NAD(+). In terms of biological role, NQR complex catalyzes the reduction of ubiquinone-1 to ubiquinol by two successive reactions, coupled with the transport of Na(+) ions from the cytoplasm to the periplasm. NqrA to NqrE are probably involved in the second step, the conversion of ubisemiquinone to ubiquinol. This is Na(+)-translocating NADH-quinone reductase subunit E from Pseudoalteromonas atlantica (strain T6c / ATCC BAA-1087).